A 727-amino-acid polypeptide reads, in one-letter code: Probable glutamate carboxypeptidase ARB_02390 (727 aa).

The signal sequence occupies residues 1-18; that stretch reads MIVKSLSLLALAAATVEG. 2 N-linked (GlcNAc...) asparagine glycosylation sites follow: Asn60 and Asn80. Residues 158 to 296 enclose the PA domain; the sequence is ATAEYVYVGR…ISQLDAQPIL (139 aa). Residue Arg197 coordinates substrate. N-linked (GlcNAc...) asparagine glycosylation is present at Asn223. Positions 255 to 279 are disordered; sequence FPGDPTTPGYPSRPDSPRKDKSPVV. Residues Thr261 and Tyr264 each coordinate Ca(2+). The tract at residues 266–565 is NAALADase; that stretch reads SRPDSPRKDK…QFLGLLGYHL (300 aa). Residues Asn310, Asn319, and Asn353 are each glycosylated (N-linked (GlcNAc...) asparagine). Residue His366 coordinates Zn(2+). Catalysis depends on Glu414, which acts as the For NAALADase activity. Position 415 (Glu415) interacts with Zn(2+). Positions 423 and 426 each coordinate Ca(2+). Position 443 (Asp443) interacts with Zn(2+). Residues 516–518 and Tyr530 each bind substrate; that span reads TGA. His531 is a Zn(2+) binding site. The active-site Charge relay system is Ser604. N-linked (GlcNAc...) asparagine glycosylation is present at Asn614. The active-site Charge relay system is His665. 675 to 676 serves as a coordination point for substrate; sequence GY. An N-linked (GlcNAc...) asparagine glycan is attached at Asn692.

Belongs to the peptidase M28 family. M28B subfamily. Zn(2+) is required as a cofactor.

The protein resides in the secreted. The catalysed reaction is Release of an unsubstituted, C-terminal glutamyl residue, typically from Ac-Asp-Glu or folylpoly-gamma-glutamates.. Its function is as follows. Has both folate hydrolase and N-acetylated-alpha-linked-acidic dipeptidase (NAALADase) activity. Also exhibits a dipeptidyl-peptidase IV type activity. This is Probable glutamate carboxypeptidase ARB_02390 from Arthroderma benhamiae (strain ATCC MYA-4681 / CBS 112371) (Trichophyton mentagrophytes).